We begin with the raw amino-acid sequence, 900 residues long: Isoleucine--tRNA ligase (900 aa).

Residues Pro-58 to His-68 carry the 'HIGH' region motif. Glu-550 lines the L-isoleucyl-5'-AMP pocket. The 'KMSKS' region motif lies at Lys-591–Ser-595. Lys-594 is a binding site for ATP. Zn(2+) contacts are provided by Cys-871, Cys-874, Cys-888, and Cys-891.

Belongs to the class-I aminoacyl-tRNA synthetase family. IleS type 1 subfamily. In terms of assembly, monomer. Requires Zn(2+) as cofactor.

It is found in the cytoplasm. The enzyme catalyses tRNA(Ile) + L-isoleucine + ATP = L-isoleucyl-tRNA(Ile) + AMP + diphosphate. In terms of biological role, catalyzes the attachment of isoleucine to tRNA(Ile). As IleRS can inadvertently accommodate and process structurally similar amino acids such as valine, to avoid such errors it has two additional distinct tRNA(Ile)-dependent editing activities. One activity is designated as 'pretransfer' editing and involves the hydrolysis of activated Val-AMP. The other activity is designated 'posttransfer' editing and involves deacylation of mischarged Val-tRNA(Ile). This Malacoplasma penetrans (strain HF-2) (Mycoplasma penetrans) protein is Isoleucine--tRNA ligase.